The chain runs to 352 residues: Selenide, water dikinase (352 aa).

C23 is an active-site residue. Residues K26 and 54-56 (SRD) each bind ATP. D57 serves as a coordination point for Mg(2+). Residues D74, D97, and 145–147 (GHS) each bind ATP. D97 is a Mg(2+) binding site. D233 contributes to the Mg(2+) binding site.

The protein belongs to the selenophosphate synthase 1 family. Class I subfamily. In terms of assembly, homodimer. It depends on Mg(2+) as a cofactor.

The enzyme catalyses hydrogenselenide + ATP + H2O = selenophosphate + AMP + phosphate + 2 H(+). Synthesizes selenophosphate from selenide and ATP. In Shewanella baltica (strain OS223), this protein is Selenide, water dikinase.